The sequence spans 395 residues: MATVDRWLLPDGIEEVLPPEAARIEVVRRQMLDLFQRWGYAFVVTPHIEFLESLLTGAGQDLDLRTLKVTDPLSGRLIGFRADITPQVARIDAHTLRREGPCRLCYAGSVLHAKPRALSTSRSPIQLGAELYGDASPASDVEVISLMLEVLEQVAVPDVHMDLGHVGIYRGLARAAGLSGEVEQRLFDALQRKAVDEVEVLTAVLPTAQAAMLRALAELCGGREVLDLAQACLVDAPAEVHAALDELIAIADSLGVRYPELPLYFDLSELRGYNYHTGVVFAAFVPGVGQSIAQGGRYDDIGADFGRARPATGFSTDLKTLVTLGQVAPAEPVVGIWAPDSHDVYLWQMVQRLRRQGERVVQALPGQRIDAARAGGCDRQLLLSDGQWQVVPLAL.

Belongs to the class-II aminoacyl-tRNA synthetase family. HisZ subfamily. In terms of assembly, heteromultimer composed of HisG and HisZ subunits.

It localises to the cytoplasm. It participates in amino-acid biosynthesis; L-histidine biosynthesis; L-histidine from 5-phospho-alpha-D-ribose 1-diphosphate: step 1/9. In terms of biological role, required for the first step of histidine biosynthesis. May allow the feedback regulation of ATP phosphoribosyltransferase activity by histidine. The protein is ATP phosphoribosyltransferase regulatory subunit of Azotobacter vinelandii (strain DJ / ATCC BAA-1303).